Reading from the N-terminus, the 648-residue chain is Siderophore transporter MYCGRDRAFT_70577 (648 aa).

Basic and acidic residues-rich tracts occupy residues 1–11 and 29–46; these read MRTSSESHSRS and SASKDHHDHDHHHKDTSI. The interval 1 to 58 is disordered; that stretch reads MRTSSESHSRSDAFNGKNDASQVTVDSDSASKDHHDHDHHHKDTSINERQSQHVHQQA. The segment covering 47–58 has biased composition (polar residues); that stretch reads NERQSQHVHQQA. 11 helical membrane-spanning segments follow: residues 79–99, 151–171, 205–225, 236–256, 303–323, 336–356, 409–429, 438–458, 468–488, 500–520, and 578–598; these read LLLYVLVASLALTMFAYALDQ, VVVLVVYAVGFAVAASSQGLA, AFWSGMLATPFLITTFINGFI, WGLGMFAIMMPVLLTPAIWTL, LIGLLLLGLAFSLILLALNLA, IAMLVIGFVILGLFIAYEALL, TIFIGTTTLTLCTMSPIGGLI, TLMVIGAIIKLIGYGVGLDGN, LAVSQVMLGMGAWTVIGARVG, VVISVMSLWSTMASSIGSTIA, and GIILAVSLVLAAVPVVFSCLM.

Belongs to the major facilitator superfamily.

It is found in the cell membrane. Functionally, siderophore transporter; part of the gene cluster 14 that mediates the biosynthesis of a ferrichrome A-like siderophors which may contribute to organismal virulence. In Zymoseptoria tritici (strain CBS 115943 / IPO323) (Speckled leaf blotch fungus), this protein is Siderophore transporter MYCGRDRAFT_70577.